We begin with the raw amino-acid sequence, 343 residues long: UDP-N-acetylglucosamine--N-acetylmuramyl-(pentapeptide) pyrophosphoryl-undecaprenol N-acetylglucosamine transferase (343 aa).

Residues 10 to 12 (TGG), asparagine 113, serine 174, and glutamine 275 each bind UDP-N-acetyl-alpha-D-glucosamine.

The protein belongs to the glycosyltransferase 28 family. MurG subfamily.

It is found in the cell membrane. The enzyme catalyses di-trans,octa-cis-undecaprenyl diphospho-N-acetyl-alpha-D-muramoyl-L-alanyl-D-glutamyl-meso-2,6-diaminopimeloyl-D-alanyl-D-alanine + UDP-N-acetyl-alpha-D-glucosamine = di-trans,octa-cis-undecaprenyl diphospho-[N-acetyl-alpha-D-glucosaminyl-(1-&gt;4)]-N-acetyl-alpha-D-muramoyl-L-alanyl-D-glutamyl-meso-2,6-diaminopimeloyl-D-alanyl-D-alanine + UDP + H(+). It functions in the pathway cell wall biogenesis; peptidoglycan biosynthesis. Its function is as follows. Cell wall formation. Catalyzes the transfer of a GlcNAc subunit on undecaprenyl-pyrophosphoryl-MurNAc-pentapeptide (lipid intermediate I) to form undecaprenyl-pyrophosphoryl-MurNAc-(pentapeptide)GlcNAc (lipid intermediate II). In Wolbachia sp. subsp. Drosophila simulans (strain wRi), this protein is UDP-N-acetylglucosamine--N-acetylmuramyl-(pentapeptide) pyrophosphoryl-undecaprenol N-acetylglucosamine transferase.